Here is a 480-residue protein sequence, read N- to C-terminus: Serine/threonine-protein kinase WAG2 (480 aa).

One can recognise a Protein kinase domain in the interval 88 to 396 (LKLIRHLGTG…AQDIKRHPFF (309 aa)). Residues 94–102 (LGTGNLGRV) and Lys-117 each bind ATP. Residue Asp-213 is the Proton acceptor of the active site.

Belongs to the protein kinase superfamily. Ser/Thr protein kinase family. Expressed in root tips, lateral root primordia and emerging true leaf primordia.

It localises to the cytoplasm. The protein localises to the cytosol. It catalyses the reaction L-seryl-[protein] + ATP = O-phospho-L-seryl-[protein] + ADP + H(+). The enzyme catalyses L-threonyl-[protein] + ATP = O-phospho-L-threonyl-[protein] + ADP + H(+). Functionally, serine/threonine-protein kinase involved in the regulation of auxin signaling. Acts as a positive regulator of cellular auxin efflux and regulates organ development by enhancing PIN-mediated polar auxin transport. Phosphorylates conserved serine residues in the PIN auxin efflux carriers. Phosphorylation of PIN proteins is required and sufficient for apical-basal PIN polarity that enables directional intercellular auxin fluxes, which mediate differential growth, tissue patterning and organogenesis. Acts as a suppressor of root waving. This chain is Serine/threonine-protein kinase WAG2 (WAG2), found in Arabidopsis thaliana (Mouse-ear cress).